The sequence spans 822 residues: Ribonucleoside-diphosphate reductase large subunit (822 aa).

Substrate is bound by residues T249, 264–265, G295, 470–474, and 651–655; these read SC, NLCTE, and PTAAS. An intrachain disulfide couples C265 to C487. The Proton acceptor role is filled by N470. The Cysteine radical intermediate role is filled by C472. The active-site Proton acceptor is E474.

It belongs to the ribonucleoside diphosphate reductase large chain family. Heterotetramer composed of a homodimer of the large subunit (R1) and a homodimer of the small subunit (R2). Larger multisubunit protein complex are also active, composed of (R1)n(R2)n.

It carries out the reaction a 2'-deoxyribonucleoside 5'-diphosphate + [thioredoxin]-disulfide + H2O = a ribonucleoside 5'-diphosphate + [thioredoxin]-dithiol. Functionally, ribonucleoside-diphosphate reductase holoenzyme provides the precursors necessary for viral DNA synthesis. Allows virus growth in non-dividing cells, as well as reactivation from latency in infected hosts. Catalyzes the biosynthesis of deoxyribonucleotides from the corresponding ribonucleotides. The polypeptide is Ribonucleoside-diphosphate reductase large subunit (Gallus gallus (Chicken)).